The primary structure comprises 229 residues: MASTFSQSVFARSLYEDSAENKVDSSKNTEANFPITLPKVLPTDPKASSLHKPQEQQPNIIPSKEEDKKPVINSMKLPSIPAPGTDNINESHIPRGYWKHPAVDKIAKRLHDQAPSDRTWSRMVSNLFAFISIQFLNRYLPNTTAVKVVSWILQALLLFNLLESVWQFVRPQPTFDDLQLTPLQRKLMGLPEGGSTSGKHLTPPRYRPNFSPSRKAENVKSPVRSTTWA.

Disordered stretches follow at residues 16–68 (EDSA…EEDK) and 189–229 (GLPE…TTWA).

The protein localises to the endoplasmic reticulum. Functionally, has a role in meiosis. The polypeptide is Meiotically up-regulated gene 31 protein (mug31) (Schizosaccharomyces pombe (strain 972 / ATCC 24843) (Fission yeast)).